Here is a 194-residue protein sequence, read N- to C-terminus: Histone H1.0-A (194 aa).

2 disordered regions span residues 1–29 and 96–194; these read MTEN…YSDM and ADEV…GRKK. The H15 domain maps to 22 to 95; that stretch reads DHPKYSDMIL…GASGSFRLAK (74 aa). 2 stretches are compositionally biased toward basic residues: residues 102–164 and 172–194; these read PAKK…KTVR and KAKK…GRKK.

It belongs to the histone H1/H5 family.

The protein resides in the nucleus. Its subcellular location is the chromosome. In terms of biological role, histones H1 are necessary for the condensation of nucleosome chains into higher-order structures. The histones H1.0 are found in cells that are in terminal stages of differentiation or that have low rates of cell division. This Xenopus laevis (African clawed frog) protein is Histone H1.0-A (h1-0-a).